A 151-amino-acid polypeptide reads, in one-letter code: Small ribosomal subunit protein uS15 (151 aa).

The disordered stretch occupies residues 1-20; that stretch reads MARLHSGKRGSSGSTRPLRT.

This sequence belongs to the universal ribosomal protein uS15 family. As to quaternary structure, part of the 30S ribosomal subunit.

In Methanococcus maripaludis (strain C7 / ATCC BAA-1331), this protein is Small ribosomal subunit protein uS15.